We begin with the raw amino-acid sequence, 149 residues long: UPF0208 membrane protein VFMJ11_0876 (149 aa).

2 consecutive transmembrane segments (helical) span residues 41 to 61 (FAVK…MVFN) and 69 to 89 (AIII…WLGN).

Belongs to the UPF0208 family.

It localises to the cell inner membrane. The protein is UPF0208 membrane protein VFMJ11_0876 of Aliivibrio fischeri (strain MJ11) (Vibrio fischeri).